Reading from the N-terminus, the 58-residue chain is Large ribosomal subunit protein uL30 (58 aa).

The protein belongs to the universal ribosomal protein uL30 family. As to quaternary structure, part of the 50S ribosomal subunit.

In Novosphingobium aromaticivorans (strain ATCC 700278 / DSM 12444 / CCUG 56034 / CIP 105152 / NBRC 16084 / F199), this protein is Large ribosomal subunit protein uL30.